A 447-amino-acid polypeptide reads, in one-letter code: Glycerol-3-phosphate acyltransferase ATS11, chloroplastic (447 aa).

Positions 1–21 are disordered; that stretch reads MFILSSSSSLPSPLSLSSSRV. A chloroplast-targeting transit peptide spans 1 to 48; it reads MFILSSSSSLPSPLSLSSSRVSLPPPSSSSLNLLPLSPHFQPPNLACS. Residues 217 to 222 carry the HXXXXD motif motif; sequence HQTEAD.

The protein belongs to the GPAT/DAPAT family.

The protein resides in the plastid. It localises to the chloroplast stroma. It carries out the reaction a fatty acyl-[ACP] + sn-glycerol 3-phosphate = a 1-acyl-sn-glycero-3-phosphate + holo-[ACP]. It catalyses the reaction sn-glycerol 3-phosphate + an acyl-CoA = a 1-acyl-sn-glycero-3-phosphate + CoA. The protein operates within phospholipid metabolism; CDP-diacylglycerol biosynthesis; CDP-diacylglycerol from sn-glycerol 3-phosphate: step 1/3. Esterifies the acyl-group from acyl-acyl carrier proteins (acyl-ACPs) to the sn-1 position of glycerol-3-phosphate. The physiological acyl donors in chloroplasts are acyl-ACPs, but acyl-CoAs are used as artificial donor for in vitro reactions. The enzyme from chilling-resistant plants discriminates against non-fluid palmitic acid and selects oleic acid whereas the enzyme from sensitive plants accepts both fatty acids. Squash is chilling-sensitive. Preferably utilizes oleoyl groups (18:1-ACP) and has lower affinity to palmitoyl (16:0-ACP) and stearoyl groups (18:0-ACP). The chain is Glycerol-3-phosphate acyltransferase ATS11, chloroplastic from Cucurbita moschata (Winter crookneck squash).